Consider the following 96-residue polypeptide: Mitochondrial import inner membrane translocase subunit Tim13-A (96 aa).

A Twin CX3C motif motif is present at residues 47-70 (CFRKCIGKPGGSLDNSEQKCIAMC). Cystine bridges form between C47–C70 and C51–C66.

Belongs to the small Tim family. Heterohexamer; composed of 3 copies of TIMM8 (TIMM8A or TIMM8B) and 3 copies of TIMM13, named soluble 70 kDa complex. Associates with the TIM22 complex, whose core is composed of TIMM22.

It localises to the mitochondrion inner membrane. Functionally, mitochondrial intermembrane chaperone that participates in the import and insertion of some multi-pass transmembrane proteins into the mitochondrial inner membrane. Also required for the transfer of beta-barrel precursors from the TOM complex to the sorting and assembly machinery (SAM complex) of the outer membrane. Acts as a chaperone-like protein that protects the hydrophobic precursors from aggregation and guide them through the mitochondrial intermembrane space. The TIMM8-TIMM13 complex mediates the import of some proteins while the predominant TIMM9-TIMM10 70 kDa complex mediates the import of much more proteins. The sequence is that of Mitochondrial import inner membrane translocase subunit Tim13-A (timm13-a) from Xenopus laevis (African clawed frog).